The following is a 1042-amino-acid chain: Ubiquitin carboxyl-terminal hydrolase 38 (1042 aa).

In terms of domain architecture, USP spans 445-949; the sequence is TGLINLGNTC…TAYVLLYKKQ (505 aa). Cysteine 454 acts as the Nucleophile in catalysis. The Proton acceptor role is filled by histidine 857.

The protein belongs to the peptidase C19 family. In terms of assembly, interacts with isoform 1 of FBXW7; this interaction prevents FBXW7-mediated degradation of MYC.

It localises to the cytoplasm. Its subcellular location is the nucleus. The enzyme catalyses Thiol-dependent hydrolysis of ester, thioester, amide, peptide and isopeptide bonds formed by the C-terminal Gly of ubiquitin (a 76-residue protein attached to proteins as an intracellular targeting signal).. Functionally, deubiquitinating enzyme that plays a role in various cellular processes, including DNA repair, cell cycle regulation, and immune response. Plays a role in the inhibition of type I interferon signaling by mediating the 'Lys-33' to 'Lys-48' ubiquitination transition of TBK1 leading to its degradation. Cleaves the ubiquitin chain from the histone demethylase LSD1/KDM1A and prevents it from degradation by the 26S proteasome, thus maintaining LSD1 protein level in cells. Plays a role in the DNA damage response by regulating the deacetylase activity of HDAC1. Mechanistically, removes the 'Lys-63'-linked ubiquitin chain promoting the deacetylase activity of HDAC1 in response to DNA damage. Also acts as a specific deubiquitinase of histone deacetylase 3/HDAC3 and cleaves its 'Lys-63'-linked ubiquitin chains to lower its histone deacetylase activity. Regulates MYC levels and cell proliferation via antagonizing ubiquitin E3 ligase FBXW7 thereby preventing MYC 'Lys-48'-linked ubiquitination and degradation. Participates in antiviral response by removing both 'Lys-48'-linked and 'Lys-63'-linked polyubiquitination of Zika virus envelope protein E. Constitutively associated with IL-33R/IL1RL1, deconjugates its 'Lys-27'-linked polyubiquitination resulting in its autophagic degradation. The protein is Ubiquitin carboxyl-terminal hydrolase 38 (Usp38) of Mus musculus (Mouse).